Here is a 1297-residue protein sequence, read N- to C-terminus: Phosphoribosylformylglycinamidine synthase (1297 aa).

ATP contacts are provided by residues 307–318 and Ala678; that span reads GASTGSGGEIRD. Positions 718, 722, and 886 each coordinate Mg(2+). In terms of domain architecture, Glutamine amidotransferase type-1 spans 1044–1297; that stretch reads MAILREQGVN…MFQNARKYFG (254 aa). Residue Cys1137 is the Nucleophile of the active site. Residues His1262 and Glu1264 contribute to the active site.

This sequence in the N-terminal section; belongs to the FGAMS family. Monomer.

The protein localises to the cytoplasm. The catalysed reaction is N(2)-formyl-N(1)-(5-phospho-beta-D-ribosyl)glycinamide + L-glutamine + ATP + H2O = 2-formamido-N(1)-(5-O-phospho-beta-D-ribosyl)acetamidine + L-glutamate + ADP + phosphate + H(+). It participates in purine metabolism; IMP biosynthesis via de novo pathway; 5-amino-1-(5-phospho-D-ribosyl)imidazole from N(2)-formyl-N(1)-(5-phospho-D-ribosyl)glycinamide: step 1/2. Its function is as follows. Phosphoribosylformylglycinamidine synthase involved in the purines biosynthetic pathway. Catalyzes the ATP-dependent conversion of formylglycinamide ribonucleotide (FGAR) and glutamine to yield formylglycinamidine ribonucleotide (FGAM) and glutamate. The polypeptide is Phosphoribosylformylglycinamidine synthase (Vibrio cholerae serotype O1 (strain ATCC 39315 / El Tor Inaba N16961)).